We begin with the raw amino-acid sequence, 1459 residues long: Endogenous retrovirus group K member 7 Pol protein (1459 aa).

Residues Leu-57 to Ile-245 form the Reverse transcriptase domain. The LPQG motif lies at Leu-161–Gly-164. A YXDD motif is present at residues Tyr-195–Asp-198. The RNase H type-1 domain occupies Leu-460 to Ile-590. Residues Asp-469, Glu-497, Asp-517, and Asp-582 each contribute to the Mg(2+) site. The Integrase-type zinc-finger motif lies at Ser-587–Gln-628. Positions 596, 600, 624, and 627 each coordinate Zn(2+). The Integrase catalytic domain occupies Arg-642–Lys-803. The integrase-type DNA-binding region spans Lys-811–Glu-859.

The protein belongs to the beta type-B retroviral polymerase family. HERV class-II K(HML-2) pol subfamily.

It carries out the reaction DNA(n) + a 2'-deoxyribonucleoside 5'-triphosphate = DNA(n+1) + diphosphate. The catalysed reaction is Endonucleolytic cleavage to 5'-phosphomonoester.. Functionally, early post-infection, the reverse transcriptase converts the viral RNA genome into double-stranded viral DNA. The RNase H domain of the reverse transcriptase performs two functions. It degrades the RNA template and specifically removes the RNA primer from the RNA/DNA hybrid. Following nuclear import, the integrase catalyzes the insertion of the linear, double-stranded viral DNA into the host cell chromosome. Endogenous Pol proteins may have kept, lost or modified their original function during evolution. In Homo sapiens (Human), this protein is Endogenous retrovirus group K member 7 Pol protein (ERVK-7).